Consider the following 255-residue polypeptide: MRILCTNDDGINAPGLEIIEQIAKDLSDDVWVVAPEYDQSGVSHSLSLNDPLRLREIGPRHFAVKGTPTDCVIMGSRHILGEKGPDLVLSGVNRGRNLAEDVVYSGTIAGALEGTMLGLPSFALSQEFSMETGDRPVWETARKFGPQILRKVIDVGIPKNTVVNINFPACAPEQVVGVLVTRMGKRNLGFLKIDERRDGRGNPYFWIGFEKADVVDTPAAGTDLAAIAARCVSVTPLRLDRTDDAFVEVLTATLK.

Residues D8, D9, S40, and N93 each coordinate a divalent metal cation.

This sequence belongs to the SurE nucleotidase family. The cofactor is a divalent metal cation.

The protein resides in the cytoplasm. The catalysed reaction is a ribonucleoside 5'-phosphate + H2O = a ribonucleoside + phosphate. In terms of biological role, nucleotidase that shows phosphatase activity on nucleoside 5'-monophosphates. The protein is 5'-nucleotidase SurE of Nitrobacter hamburgensis (strain DSM 10229 / NCIMB 13809 / X14).